The sequence spans 644 residues: MFQDNPLLAQLKQQLHSQTPRAEGVVKATEKGFGFLEVDAQKSYFIPPPQMKKVMHGDRIIAVIHSEKERESAEPEELVEPFLTRFVGKVQGKNDRLAIVPDHPLLKDAIPCRAARGLNHEFKEGDWAVAEMRRHPLKGDRSFYAELTQYITFGDDHFVPWWVTLARHNLEKEAPDGVATEMLDEGLVREDLTALDFVTIDSASTEDMDDALFAKALPDDKLQLIVAIADPTAWIAEGSKLDKAAKIRAFTNYLPGFNIPMLPRELSDDLCSLRANEVRPVLACRMTLSADGTIEDNIEFFAATIESKAKLVYDQVSDWLENTGDWQPESEAIAEQVRLLAQICQRRGEWRHNHALVFKDRPDYRFILGEKGEVLDIVAEPRRIANRIVEEAMIAANICAARVLRDKLGFGIYNVHMGFDPANADALAALLKTHGLHVDAEEVLTLDGFCKLRRELDAQPTGFLDSRIRRFQSFAEISTEPGPHFGLGLEAYATWTSPIRKYGDMINHRLLKAVIKGETATRPQDEITVQMAERRRLNRMAERDVGDWLYARFLKDKAGTDTRFAAEIVDISRGGMRVRLVDNGAIAFIPAPFLHAVRDELVCSQENGTVQIKGETAYKVTDVIDVTIAEVRMETRSIIARPVA.

One can recognise an RNB domain in the interval Arg189–Lys516. The region spanning Asp561 to Val643 is the S1 motif domain.

It belongs to the RNR ribonuclease family. RNase II subfamily.

Its subcellular location is the cytoplasm. It carries out the reaction Exonucleolytic cleavage in the 3'- to 5'-direction to yield nucleoside 5'-phosphates.. In terms of biological role, involved in mRNA degradation. Hydrolyzes single-stranded polyribonucleotides processively in the 3' to 5' direction. The protein is Exoribonuclease 2 of Escherichia coli (strain SMS-3-5 / SECEC).